We begin with the raw amino-acid sequence, 360 residues long: Peptide chain release factor 1 (360 aa).

Glutamine 235 carries the post-translational modification N5-methylglutamine.

It belongs to the prokaryotic/mitochondrial release factor family. In terms of processing, methylated by PrmC. Methylation increases the termination efficiency of RF1.

It localises to the cytoplasm. Functionally, peptide chain release factor 1 directs the termination of translation in response to the peptide chain termination codons UAG and UAA. The polypeptide is Peptide chain release factor 1 (Blochmanniella pennsylvanica (strain BPEN)).